A 564-amino-acid polypeptide reads, in one-letter code: Dihydroxy-acid dehydratase (564 aa).

[2Fe-2S] cluster is bound at residue Cys-53. Asp-85 contacts Mg(2+). A [2Fe-2S] cluster-binding site is contributed by Cys-126. 2 residues coordinate Mg(2+): Asp-127 and Lys-128. Position 128 is an N6-carboxylysine (Lys-128). Cys-203 is a binding site for [2Fe-2S] cluster. Glu-454 provides a ligand contact to Mg(2+). Ser-480 acts as the Proton acceptor in catalysis.

The protein belongs to the IlvD/Edd family. In terms of assembly, homodimer. [2Fe-2S] cluster is required as a cofactor. Mg(2+) serves as cofactor.

It carries out the reaction (2R)-2,3-dihydroxy-3-methylbutanoate = 3-methyl-2-oxobutanoate + H2O. The enzyme catalyses (2R,3R)-2,3-dihydroxy-3-methylpentanoate = (S)-3-methyl-2-oxopentanoate + H2O. It participates in amino-acid biosynthesis; L-isoleucine biosynthesis; L-isoleucine from 2-oxobutanoate: step 3/4. The protein operates within amino-acid biosynthesis; L-valine biosynthesis; L-valine from pyruvate: step 3/4. Its function is as follows. Functions in the biosynthesis of branched-chain amino acids. Catalyzes the dehydration of (2R,3R)-2,3-dihydroxy-3-methylpentanoate (2,3-dihydroxy-3-methylvalerate) into 2-oxo-3-methylpentanoate (2-oxo-3-methylvalerate) and of (2R)-2,3-dihydroxy-3-methylbutanoate (2,3-dihydroxyisovalerate) into 2-oxo-3-methylbutanoate (2-oxoisovalerate), the penultimate precursor to L-isoleucine and L-valine, respectively. This is Dihydroxy-acid dehydratase from Mycobacterium ulcerans (strain Agy99).